The following is a 1380-amino-acid chain: DNA-directed RNA polymerase subunit beta (1380 aa).

This sequence belongs to the RNA polymerase beta chain family. In terms of assembly, the RNAP catalytic core consists of 2 alpha, 1 beta, 1 beta' and 1 omega subunit. When a sigma factor is associated with the core the holoenzyme is formed, which can initiate transcription.

It catalyses the reaction RNA(n) + a ribonucleoside 5'-triphosphate = RNA(n+1) + diphosphate. Its function is as follows. DNA-dependent RNA polymerase catalyzes the transcription of DNA into RNA using the four ribonucleoside triphosphates as substrates. This is DNA-directed RNA polymerase subunit beta from Ehrlichia chaffeensis (strain ATCC CRL-10679 / Arkansas).